A 155-amino-acid polypeptide reads, in one-letter code: HTH-type transcriptional repressor MdtR (155 aa).

The HTH marR-type domain occupies alanine 4 to glutamine 140. The H-T-H motif DNA-binding region spans valine 54 to glutamine 77.

In terms of assembly, homodimer.

Its subcellular location is the cytoplasm. Its activity is regulated as follows. The binding of MdtR to the mdtRP promoter region is severely inhibited by adding excess concentrations of fusidic acid or novobiocin but not by actinomycin or streptomycin. Functionally, repressor of the multidrug resistance operon mdtRP. Acts by binding directly to the mdtRP promoter region, leading to the repression of its expression. This Bacillus subtilis (strain 168) protein is HTH-type transcriptional repressor MdtR.